A 142-amino-acid polypeptide reads, in one-letter code: Large ribosomal subunit protein uL13 (142 aa).

The protein belongs to the universal ribosomal protein uL13 family. Part of the 50S ribosomal subunit.

In terms of biological role, this protein is one of the early assembly proteins of the 50S ribosomal subunit, although it is not seen to bind rRNA by itself. It is important during the early stages of 50S assembly. This chain is Large ribosomal subunit protein uL13, found in Bordetella avium (strain 197N).